The chain runs to 217 residues: Harpin secretion protein HrcR (217 aa).

The next 4 membrane-spanning stretches (helical) occupy residues 11–31, 52–72, 158–178, and 185–205; these read FALF…CTCF, PNMA…APVF, IGFL…NVLL, and VAPM…INGW.

It belongs to the FliP/MopC/SpaP family.

The protein localises to the cell membrane. Functionally, required for the secretion of harpin. The protein is Harpin secretion protein HrcR (hrcR) of Erwinia amylovora (Fire blight bacteria).